The following is a 464-amino-acid chain: tRNA modification GTPase MnmE (464 aa).

3 residues coordinate (6S)-5-formyl-5,6,7,8-tetrahydrofolate: arginine 23, glutamate 84, and arginine 123. A TrmE-type G domain is found at 216 to 386 (GARATLVGRP…LGATVARLLL (171 aa)). Asparagine 226 is a binding site for K(+). GTP is bound by residues 226-231 (NAGKSS), 245-251 (TPIPGTT), and 270-273 (DTAG). Position 230 (serine 230) interacts with Mg(2+). 3 residues coordinate K(+): threonine 245, isoleucine 247, and threonine 250. Threonine 251 is a Mg(2+) binding site. (6S)-5-formyl-5,6,7,8-tetrahydrofolate is bound at residue lysine 464.

This sequence belongs to the TRAFAC class TrmE-Era-EngA-EngB-Septin-like GTPase superfamily. TrmE GTPase family. Homodimer. Heterotetramer of two MnmE and two MnmG subunits. Requires K(+) as cofactor.

It localises to the cytoplasm. Its function is as follows. Exhibits a very high intrinsic GTPase hydrolysis rate. Involved in the addition of a carboxymethylaminomethyl (cmnm) group at the wobble position (U34) of certain tRNAs, forming tRNA-cmnm(5)s(2)U34. This chain is tRNA modification GTPase MnmE, found in Roseiflexus castenholzii (strain DSM 13941 / HLO8).